The chain runs to 486 residues: Arginine/agmatine antiporter (486 aa).

Transmembrane regions (helical) follow at residues leucine 12–serine 32, alanine 41–alanine 61, glycine 85–glycine 105, proline 132–isoleucine 152, isoleucine 160–leucine 180, serine 211–alanine 231, alanine 242–phenylalanine 262, valine 296–isoleucine 316, valine 341–threonine 361, methionine 367–valine 387, isoleucine 418–leucine 438, and glutamate 461–threonine 481.

It belongs to the amino acid-polyamine-organocation (APC) superfamily. Basic amino acid/polyamine antiporter (APA) (TC 2.A.3.2) family.

The protein resides in the cell inner membrane. Catalyzes the exchange of L-arginine for agmatine. The arginine uptake by the bacterium in the macrophage may be a virulence factor against the host innate immune response. The sequence is that of Arginine/agmatine antiporter (aaxC) from Chlamydia abortus (strain DSM 27085 / S26/3) (Chlamydophila abortus).